The following is a 182-amino-acid chain: Prorelaxin (182 aa).

The signal sequence occupies residues 1-25 (MRRLFLSHVLGAWLLLSQLPRELSG). Gln26 is modified (pyrrolidone carboxylic acid). 3 disulfides stabilise this stretch: Cys35-Cys169, Cys47-Cys182, and Cys168-Cys173. Positions 54 to 156 (KTVLRLEEPG…LKNLGLDKHS (103 aa)) are cleaved as a propeptide — connecting peptide. Positions 161 to 162 (MI) are excised as a propeptide. Position 163 is a pyrrolidone carboxylic acid (Gln163).

This sequence belongs to the insulin family. As to quaternary structure, heterodimer of a B chain and an A chain linked by two disulfide bonds.

It localises to the secreted. Relaxin is an ovarian hormone that acts with estrogen to produce dilatation of the birth canal in many mammals. This Equus caballus (Horse) protein is Prorelaxin (RLN).